Consider the following 373-residue polypeptide: Anhydro-N-acetylmuramic acid kinase (373 aa).

Residue 12 to 19 (GTSLDGVD) coordinates ATP.

It belongs to the anhydro-N-acetylmuramic acid kinase family.

The enzyme catalyses 1,6-anhydro-N-acetyl-beta-muramate + ATP + H2O = N-acetyl-D-muramate 6-phosphate + ADP + H(+). The protein operates within amino-sugar metabolism; 1,6-anhydro-N-acetylmuramate degradation. It participates in cell wall biogenesis; peptidoglycan recycling. In terms of biological role, catalyzes the specific phosphorylation of 1,6-anhydro-N-acetylmuramic acid (anhMurNAc) with the simultaneous cleavage of the 1,6-anhydro ring, generating MurNAc-6-P. Is required for the utilization of anhMurNAc either imported from the medium or derived from its own cell wall murein, and thus plays a role in cell wall recycling. The protein is Anhydro-N-acetylmuramic acid kinase of Erwinia tasmaniensis (strain DSM 17950 / CFBP 7177 / CIP 109463 / NCPPB 4357 / Et1/99).